The chain runs to 178 residues: Inorganic pyrophosphatase (178 aa).

Positions 30, 44, and 56 each coordinate substrate. Mg(2+) is bound by residues Asp66, Asp71, and Asp103. Tyr142 serves as a coordination point for substrate.

This sequence belongs to the PPase family. Homohexamer. The cofactor is Mg(2+).

The protein localises to the cytoplasm. The enzyme catalyses diphosphate + H2O = 2 phosphate + H(+). In terms of biological role, catalyzes the hydrolysis of inorganic pyrophosphate (PPi) forming two phosphate ions. The sequence is that of Inorganic pyrophosphatase from Xanthomonas campestris pv. campestris (strain ATCC 33913 / DSM 3586 / NCPPB 528 / LMG 568 / P 25).